We begin with the raw amino-acid sequence, 534 residues long: ATP synthase subunit beta 2 (534 aa).

Over residues 1 to 10 the composition is skewed to polar residues; the sequence is MADPQATNGT. Residues 1-30 form a disordered region; the sequence is MADPQATNGTGAACAERDASDVGDVSDVGD. Residue 185 to 192 participates in ATP binding; it reads GGAGVGKT. Positions 494–505 are enriched in basic and acidic residues; sequence AAAREADARREA. Positions 494–534 are disordered; sequence AAAREADARREAAAAASGAGPGTTSDPASGSAEPQGARHGR.

The protein belongs to the ATPase alpha/beta chains family. In terms of assembly, F-type ATPases have 2 components, CF(1) - the catalytic core - and CF(0) - the membrane proton channel. CF(1) has five subunits: alpha(3), beta(3), gamma(1), delta(1), epsilon(1). CF(0) has three main subunits: a(1), b(2) and c(9-12). The alpha and beta chains form an alternating ring which encloses part of the gamma chain. CF(1) is attached to CF(0) by a central stalk formed by the gamma and epsilon chains, while a peripheral stalk is formed by the delta and b chains.

It localises to the cell inner membrane. The enzyme catalyses ATP + H2O + 4 H(+)(in) = ADP + phosphate + 5 H(+)(out). Produces ATP from ADP in the presence of a proton gradient across the membrane. The catalytic sites are hosted primarily by the beta subunits. The sequence is that of ATP synthase subunit beta 2 from Burkholderia pseudomallei (strain 668).